A 437-amino-acid chain; its full sequence is Ribosomal protein uS12 methylthiotransferase RimO (437 aa).

In terms of domain architecture, MTTase N-terminal spans 5–116 (PTIAISHLGC…IVEIVERVET (112 aa)). [4Fe-4S] cluster contacts are provided by Cys-14, Cys-50, Cys-79, Cys-154, Cys-158, and Cys-161. A Radical SAM core domain is found at 140 to 369 (TTSEGVAYLR…MLTQQPISER (230 aa)). Positions 372–437 (QAYIGQTVDV…DTYDLYGEIV (66 aa)) constitute a TRAM domain.

Belongs to the methylthiotransferase family. RimO subfamily. The cofactor is [4Fe-4S] cluster.

The protein localises to the cytoplasm. It carries out the reaction L-aspartate(89)-[ribosomal protein uS12]-hydrogen + (sulfur carrier)-SH + AH2 + 2 S-adenosyl-L-methionine = 3-methylsulfanyl-L-aspartate(89)-[ribosomal protein uS12]-hydrogen + (sulfur carrier)-H + 5'-deoxyadenosine + L-methionine + A + S-adenosyl-L-homocysteine + 2 H(+). Catalyzes the methylthiolation of an aspartic acid residue of ribosomal protein uS12. This Microcystis aeruginosa (strain NIES-843 / IAM M-2473) protein is Ribosomal protein uS12 methylthiotransferase RimO.